The primary structure comprises 350 residues: 3-dehydroquinate synthase (350 aa).

NAD(+)-binding positions include 106–110 (GVVGD), 130–131 (TS), Lys-143, and Lys-152. The Zn(2+) site is built by Glu-185, His-246, and His-263.

The protein belongs to the sugar phosphate cyclases superfamily. Dehydroquinate synthase family. Co(2+) serves as cofactor. It depends on Zn(2+) as a cofactor. NAD(+) is required as a cofactor.

It is found in the cytoplasm. The enzyme catalyses 7-phospho-2-dehydro-3-deoxy-D-arabino-heptonate = 3-dehydroquinate + phosphate. The protein operates within metabolic intermediate biosynthesis; chorismate biosynthesis; chorismate from D-erythrose 4-phosphate and phosphoenolpyruvate: step 2/7. Catalyzes the conversion of 3-deoxy-D-arabino-heptulosonate 7-phosphate (DAHP) to dehydroquinate (DHQ). The polypeptide is 3-dehydroquinate synthase (Clostridium perfringens (strain SM101 / Type A)).